Reading from the N-terminus, the 1188-residue chain is DNA-directed RNA polymerase subunit beta (1188 aa).

The protein belongs to the RNA polymerase beta chain family. In terms of assembly, the RNAP catalytic core consists of 2 alpha, 1 beta, 1 beta' and 1 omega subunit. When a sigma factor is associated with the core the holoenzyme is formed, which can initiate transcription.

It carries out the reaction RNA(n) + a ribonucleoside 5'-triphosphate = RNA(n+1) + diphosphate. DNA-dependent RNA polymerase catalyzes the transcription of DNA into RNA using the four ribonucleoside triphosphates as substrates. In Streptococcus pyogenes serotype M18 (strain MGAS8232), this protein is DNA-directed RNA polymerase subunit beta.